Reading from the N-terminus, the 332-residue chain is Ketol-acid reductoisomerase (NADP(+)) (332 aa).

The region spanning 2 to 182 (AKVYIDKDAS…GATRAGVIET (181 aa)) is the KARI N-terminal Rossmann domain. NADP(+)-binding positions include 25-28 (YGSQ), Ser53, and 83-86 (DMVQ). His108 is an active-site residue. Gly134 contributes to the NADP(+) binding site. The region spanning 183–328 (TFKEETETDL…RQIREISLRG (146 aa)) is the KARI C-terminal knotted domain. Mg(2+)-binding residues include Asp191, Glu195, Glu227, and Glu231. Ser252 lines the substrate pocket.

The protein belongs to the ketol-acid reductoisomerase family. Mg(2+) is required as a cofactor.

The enzyme catalyses (2R)-2,3-dihydroxy-3-methylbutanoate + NADP(+) = (2S)-2-acetolactate + NADPH + H(+). It catalyses the reaction (2R,3R)-2,3-dihydroxy-3-methylpentanoate + NADP(+) = (S)-2-ethyl-2-hydroxy-3-oxobutanoate + NADPH + H(+). It functions in the pathway amino-acid biosynthesis; L-isoleucine biosynthesis; L-isoleucine from 2-oxobutanoate: step 2/4. It participates in amino-acid biosynthesis; L-valine biosynthesis; L-valine from pyruvate: step 2/4. Functionally, involved in the biosynthesis of branched-chain amino acids (BCAA). Catalyzes an alkyl-migration followed by a ketol-acid reduction of (S)-2-acetolactate (S2AL) to yield (R)-2,3-dihydroxy-isovalerate. In the isomerase reaction, S2AL is rearranged via a Mg-dependent methyl migration to produce 3-hydroxy-3-methyl-2-ketobutyrate (HMKB). In the reductase reaction, this 2-ketoacid undergoes a metal-dependent reduction by NADPH to yield (R)-2,3-dihydroxy-isovalerate. This is Ketol-acid reductoisomerase (NADP(+)) from Sulfurisphaera tokodaii (strain DSM 16993 / JCM 10545 / NBRC 100140 / 7) (Sulfolobus tokodaii).